The following is a 798-amino-acid chain: Phenylalanine--tRNA ligase beta subunit (798 aa).

In terms of domain architecture, tRNA-binding spans 39–147 (AARLAGFTLA…PSGEVGERFI (109 aa)). The 72-residue stretch at 404 to 475 (DHSRAYKLDA…RIASLTKLVG (72 aa)) folds into the B5 domain. Asp453, Asp459, Glu462, and Glu463 together coordinate Mg(2+). Residues 704–797 (RDLQAVERDF…VAKATGGTLR (94 aa)) form the FDX-ACB domain.

The protein belongs to the phenylalanyl-tRNA synthetase beta subunit family. Type 1 subfamily. As to quaternary structure, tetramer of two alpha and two beta subunits. Mg(2+) serves as cofactor.

The protein localises to the cytoplasm. The enzyme catalyses tRNA(Phe) + L-phenylalanine + ATP = L-phenylalanyl-tRNA(Phe) + AMP + diphosphate + H(+). This chain is Phenylalanine--tRNA ligase beta subunit, found in Ruegeria pomeroyi (strain ATCC 700808 / DSM 15171 / DSS-3) (Silicibacter pomeroyi).